The sequence spans 240 residues: Dephospho-CoA kinase domain-containing protein (240 aa).

The region spanning 3–207 is the DPCK domain; sequence LVGLTGGIAS…RSMEYLPLRL (205 aa). Position 8-15 (8-15) interacts with ATP; sequence GGIASGKS.

This sequence belongs to the CoaE family.

The protein is Dephospho-CoA kinase domain-containing protein (Dcakd) of Rattus norvegicus (Rat).